The chain runs to 239 residues: 4-hydroxy-tetrahydrodipicolinate reductase (239 aa).

NAD(+)-binding positions include 8 to 13, 78 to 80, and 102 to 105; these read GSTGKM, GTT, and SANM. The Proton donor/acceptor role is filled by His-134. His-135 contributes to the (S)-2,3,4,5-tetrahydrodipicolinate binding site. Lys-138 (proton donor) is an active-site residue. Residue 144 to 145 participates in (S)-2,3,4,5-tetrahydrodipicolinate binding; sequence GT.

The protein belongs to the DapB family.

It is found in the cytoplasm. The enzyme catalyses (S)-2,3,4,5-tetrahydrodipicolinate + NAD(+) + H2O = (2S,4S)-4-hydroxy-2,3,4,5-tetrahydrodipicolinate + NADH + H(+). It carries out the reaction (S)-2,3,4,5-tetrahydrodipicolinate + NADP(+) + H2O = (2S,4S)-4-hydroxy-2,3,4,5-tetrahydrodipicolinate + NADPH + H(+). The protein operates within amino-acid biosynthesis; L-lysine biosynthesis via DAP pathway; (S)-tetrahydrodipicolinate from L-aspartate: step 4/4. In terms of biological role, catalyzes the conversion of 4-hydroxy-tetrahydrodipicolinate (HTPA) to tetrahydrodipicolinate. The chain is 4-hydroxy-tetrahydrodipicolinate reductase from Rickettsia peacockii (strain Rustic).